The following is a 479-amino-acid chain: UDP-N-acetylmuramate--L-alanine ligase (479 aa).

124–130 (GSHGKTT) contributes to the ATP binding site.

This sequence belongs to the MurCDEF family.

The protein localises to the cytoplasm. The enzyme catalyses UDP-N-acetyl-alpha-D-muramate + L-alanine + ATP = UDP-N-acetyl-alpha-D-muramoyl-L-alanine + ADP + phosphate + H(+). It participates in cell wall biogenesis; peptidoglycan biosynthesis. Its function is as follows. Cell wall formation. The polypeptide is UDP-N-acetylmuramate--L-alanine ligase (Synechococcus sp. (strain RCC307)).